Reading from the N-terminus, the 667-residue chain is Primary amine oxidase (667 aa).

A signal peptide spans 1 to 18; sequence KFALFSVLTLLSFHAVFS. N-linked (GlcNAc...) asparagine glycosylation is present at Asn-149. Cys-155 and Cys-176 are oxidised to a cystine. Positions 216 to 246 are disordered; sequence PTAENTEYQVSKQSPPFGPKQHSLTSHQPQG. Residues 218 to 229 are compositionally biased toward polar residues; the sequence is AENTEYQVSKQS. A glycan (N-linked (GlcNAc...) asparagine) is linked at Asn-252. 316 to 327 is a binding site for substrate; the sequence is FFDSGEFGFGLS. Asp-318 (proton acceptor) is an active-site residue. Cys-337 and Cys-363 are disulfide-bonded. Asn-382 is a glycosylation site (N-linked (GlcNAc...) asparagine). Residue 402–407 coordinates substrate; that stretch reads VGNYDN. The active-site Schiff-base intermediate with substrate; via topaquinone is the Tyr-405. A 2',4',5'-topaquinone modification is found at Tyr-405. The Cu cation site is built by His-460 and His-462. Positions 469, 470, and 471 each coordinate Mn(2+). An N-linked (GlcNAc...) asparagine glycan is attached at Asn-576. The Mn(2+) site is built by Asp-610 and Ile-611. Residue His-621 participates in Cu cation binding.

The protein belongs to the copper/topaquinone oxidase family. Homodimer. It depends on Cu cation as a cofactor. Requires Zn(2+) as cofactor. L-topaquinone serves as cofactor. Mn(2+) is required as a cofactor. In terms of processing, glycosylated; contains two carbohydrate chains per monomer. Topaquinone (TPQ) is generated by copper-dependent autoxidation of a specific tyrosyl residue.

It catalyses the reaction a primary methyl amine + O2 + H2O = an aldehyde + H2O2 + NH4(+). The protein is Primary amine oxidase of Lens culinaris (Lentil).